The chain runs to 387 residues: 4-hydroxy-3-methylbut-2-en-1-yl diphosphate synthase (flavodoxin) (387 aa).

Positions 293, 296, 328, and 335 each coordinate [4Fe-4S] cluster.

This sequence belongs to the IspG family. [4Fe-4S] cluster serves as cofactor.

The enzyme catalyses (2E)-4-hydroxy-3-methylbut-2-enyl diphosphate + oxidized [flavodoxin] + H2O + 2 H(+) = 2-C-methyl-D-erythritol 2,4-cyclic diphosphate + reduced [flavodoxin]. It participates in isoprenoid biosynthesis; isopentenyl diphosphate biosynthesis via DXP pathway; isopentenyl diphosphate from 1-deoxy-D-xylulose 5-phosphate: step 5/6. In terms of biological role, converts 2C-methyl-D-erythritol 2,4-cyclodiphosphate (ME-2,4cPP) into 1-hydroxy-2-methyl-2-(E)-butenyl 4-diphosphate. In Treponema denticola (strain ATCC 35405 / DSM 14222 / CIP 103919 / JCM 8153 / KCTC 15104), this protein is 4-hydroxy-3-methylbut-2-en-1-yl diphosphate synthase (flavodoxin).